Reading from the N-terminus, the 241-residue chain is Phycocyanobilin:ferredoxin oxidoreductase (241 aa).

The protein belongs to the HY2 family.

It carries out the reaction (2R,3Z)-phycocyanobilin + 4 oxidized [2Fe-2S]-[ferredoxin] = biliverdin IXalpha + 4 reduced [2Fe-2S]-[ferredoxin] + 4 H(+). Functionally, catalyzes the four-electron reduction of biliverdin IX-alpha (2-electron reduction at both the A and D rings); the reaction proceeds via an isolatable 2-electron intermediate, 181,182-dihydrobiliverdin. The sequence is that of Phycocyanobilin:ferredoxin oxidoreductase from Prochlorococcus marinus (strain MIT 9301).